The primary structure comprises 156 residues: Small ribosomal subunit protein uS7 (156 aa).

Belongs to the universal ribosomal protein uS7 family. In terms of assembly, part of the 30S ribosomal subunit. Contacts proteins S9 and S11.

Its function is as follows. One of the primary rRNA binding proteins, it binds directly to 16S rRNA where it nucleates assembly of the head domain of the 30S subunit. Is located at the subunit interface close to the decoding center, probably blocks exit of the E-site tRNA. In Aster yellows witches'-broom phytoplasma (strain AYWB), this protein is Small ribosomal subunit protein uS7.